We begin with the raw amino-acid sequence, 348 residues long: GMP reductase 2 (348 aa).

NADP(+)-binding positions include 26-27 (SR), lysine 78, 129-131 (DVA), and 180-181 (IG). 3 residues coordinate K(+): glycine 181, glycine 183, and cysteine 186. The Thioimidate intermediate role is filled by cysteine 186. The active-site Proton donor/acceptor is threonine 188. K(+) is bound at residue arginine 189. GMP is bound by residues 219–221 (DGG), 242–243 (GG), 268–270 (GMS), and 286–290 (RASEG). NADP(+) contacts are provided by residues methionine 269 and 285–286 (YR). An N6-acetyllysine modification is found at lysine 291. 314 to 317 (STCT) contributes to the NADP(+) binding site.

It belongs to the IMPDH/GMPR family. GuaC type 1 subfamily. As to quaternary structure, homotetramer. In terms of tissue distribution, highly expressed in heart, skeletal muscle, kidney, brain, liver, prostate, spleen, placenta, testis and ovary. Low expression in colon, thymus and peripheral blood leukocytes.

The catalysed reaction is IMP + NH4(+) + NADP(+) = GMP + NADPH + 2 H(+). Its function is as follows. Catalyzes the irreversible NADPH-dependent deamination of GMP to IMP. It functions in the conversion of nucleobase, nucleoside and nucleotide derivatives of G to A nucleotides, and in maintaining the intracellular balance of A and G nucleotides. Plays a role in modulating cellular differentiation. This is GMP reductase 2 from Homo sapiens (Human).